The chain runs to 207 residues: LexA repressor (207 aa).

The H-T-H motif DNA-binding region spans 28–48 (VREIGEAVGLASSSTVHGHLS). Active-site for autocatalytic cleavage activity residues include Ser129 and Lys167.

This sequence belongs to the peptidase S24 family. As to quaternary structure, homodimer.

The enzyme catalyses Hydrolysis of Ala-|-Gly bond in repressor LexA.. Represses a number of genes involved in the response to DNA damage (SOS response), including recA and lexA. In the presence of single-stranded DNA, RecA interacts with LexA causing an autocatalytic cleavage which disrupts the DNA-binding part of LexA, leading to derepression of the SOS regulon and eventually DNA repair. This chain is LexA repressor, found in Halalkalibacterium halodurans (strain ATCC BAA-125 / DSM 18197 / FERM 7344 / JCM 9153 / C-125) (Bacillus halodurans).